The primary structure comprises 729 residues: Fatty acid oxidation complex subunit alpha (729 aa).

Residues 1–189 (MLYKGDTLYL…KIGLVDGVVK (189 aa)) form an enoyl-CoA hydratase/isomerase region. Aspartate 296 provides a ligand contact to substrate. Residues 311 to 729 (ETPKQAAVLG…ARPVGSLKTA (419 aa)) are 3-hydroxyacyl-CoA dehydrogenase. NAD(+) is bound by residues methionine 324, aspartate 343, 400-402 (VVE), lysine 407, and serine 429. Residue histidine 450 is the For 3-hydroxyacyl-CoA dehydrogenase activity of the active site. Asparagine 453 serves as a coordination point for NAD(+). Substrate is bound by residues asparagine 500 and tyrosine 660. Residues 708–729 (RHNEPYYPPVEPARPVGSLKTA) are disordered.

The protein in the N-terminal section; belongs to the enoyl-CoA hydratase/isomerase family. In the C-terminal section; belongs to the 3-hydroxyacyl-CoA dehydrogenase family. As to quaternary structure, heterotetramer of two alpha chains (FadB) and two beta chains (FadA).

The enzyme catalyses a (3S)-3-hydroxyacyl-CoA + NAD(+) = a 3-oxoacyl-CoA + NADH + H(+). The catalysed reaction is a (3S)-3-hydroxyacyl-CoA = a (2E)-enoyl-CoA + H2O. It carries out the reaction a 4-saturated-(3S)-3-hydroxyacyl-CoA = a (3E)-enoyl-CoA + H2O. It catalyses the reaction (3S)-3-hydroxybutanoyl-CoA = (3R)-3-hydroxybutanoyl-CoA. The enzyme catalyses a (3Z)-enoyl-CoA = a 4-saturated (2E)-enoyl-CoA. The catalysed reaction is a (3E)-enoyl-CoA = a 4-saturated (2E)-enoyl-CoA. It functions in the pathway lipid metabolism; fatty acid beta-oxidation. Involved in the aerobic and anaerobic degradation of long-chain fatty acids via beta-oxidation cycle. Catalyzes the formation of 3-oxoacyl-CoA from enoyl-CoA via L-3-hydroxyacyl-CoA. It can also use D-3-hydroxyacyl-CoA and cis-3-enoyl-CoA as substrate. In Salmonella typhimurium (strain LT2 / SGSC1412 / ATCC 700720), this protein is Fatty acid oxidation complex subunit alpha.